Consider the following 357-residue polypeptide: Alanine racemase (357 aa).

Lysine 34 functions as the Proton acceptor; specific for D-alanine in the catalytic mechanism. Lysine 34 bears the N6-(pyridoxal phosphate)lysine mark. Arginine 129 is a substrate binding site. The Proton acceptor; specific for L-alanine role is filled by tyrosine 254. Methionine 302 is a binding site for substrate.

The protein belongs to the alanine racemase family. Pyridoxal 5'-phosphate is required as a cofactor.

The enzyme catalyses L-alanine = D-alanine. The protein operates within amino-acid biosynthesis; D-alanine biosynthesis; D-alanine from L-alanine: step 1/1. Functionally, catalyzes the interconversion of L-alanine and D-alanine. Likely plays an important role in supplying D-alanine, which is an indispensable constituent in the biosynthesis of bacterial cell-wall peptidoglycan. The sequence is that of Alanine racemase from Aeromonas hydrophila subsp. hydrophila (strain ATCC 7966 / DSM 30187 / BCRC 13018 / CCUG 14551 / JCM 1027 / KCTC 2358 / NCIMB 9240 / NCTC 8049).